The sequence spans 309 residues: CDK-activating kinase assembly factor MAT1 (309 aa).

Met-1 carries the post-translational modification N-acetylmethionine. The segment at 6 to 50 (CPRCKTTKYRNPSLKLMVNVCGHTLCESCVDLLFVRGAGNCPECG) adopts an RING-type zinc-finger fold. Phosphothreonine is present on Thr-51. The UIM domain maps to 142-161 (REQEELEEALEVERQEHEQR). Ser-279 is subject to Phosphoserine.

Associates primarily with CDK7 and cyclin H to form the CAK complex. CAK can further associate with the core-TFIIH to form the TFIIH basal transcription factor.

The protein localises to the nucleus. Stabilizes the cyclin H-CDK7 complex to form a functional CDK-activating kinase (CAK) enzymatic complex. CAK activates the cyclin-associated kinases CDK1, CDK2, CDK4 and CDK6 by threonine phosphorylation. CAK complexed to the core-TFIIH basal transcription factor activates RNA polymerase II by serine phosphorylation of the repetitive C-terminal domain (CTD) of its large subunit (POLR2A), allowing its escape from the promoter and elongation of the transcripts. Involved in cell cycle control and in RNA transcription by RNA polymerase II. This Mus musculus (Mouse) protein is CDK-activating kinase assembly factor MAT1 (Mnat1).